The primary structure comprises 196 residues: NADPH:quinone oxidoreductase (196 aa).

It belongs to the SsuE family. In terms of assembly, homotetramer. FMN is required as a cofactor.

It localises to the cell membrane. The catalysed reaction is a quinone + NADH + H(+) = a quinol + NAD(+). The enzyme catalyses a quinone + NADPH + H(+) = a quinol + NADP(+). The enzyme apparently serves as a quinone reductase in connection with conjugation reactions of hydroquinones involved in detoxification pathways. In Arabidopsis thaliana (Mouse-ear cress), this protein is NADPH:quinone oxidoreductase (NQR).